Here is a 233-residue protein sequence, read N- to C-terminus: Glyceraldehyde-3-phosphate dehydrogenase A, chloroplastic (233 aa).

D-glyceraldehyde 3-phosphate contacts are provided by residues serine 49–threonine 51, threonine 80, arginine 95, threonine 108–glycine 109, and arginine 131. The active-site Nucleophile is cysteine 50. Asparagine 213 contributes to the NADP(+) binding site.

The protein belongs to the glyceraldehyde-3-phosphate dehydrogenase family. In terms of assembly, tetramer of either four A chains (GAPDH 2) or two A and two B chains (GAPDH 1).

It localises to the plastid. Its subcellular location is the chloroplast. It catalyses the reaction D-glyceraldehyde 3-phosphate + phosphate + NADP(+) = (2R)-3-phospho-glyceroyl phosphate + NADPH + H(+). The protein operates within carbohydrate biosynthesis; Calvin cycle. The chain is Glyceraldehyde-3-phosphate dehydrogenase A, chloroplastic (GAPA) from Sinapis alba (White mustard).